The following is a 264-amino-acid chain: Acyl-[acyl-carrier-protein]--UDP-N-acetylglucosamine O-acyltransferase (264 aa).

The protein belongs to the transferase hexapeptide repeat family. LpxA subfamily. Homotrimer.

It is found in the cytoplasm. It carries out the reaction a (3R)-hydroxyacyl-[ACP] + UDP-N-acetyl-alpha-D-glucosamine = a UDP-3-O-[(3R)-3-hydroxyacyl]-N-acetyl-alpha-D-glucosamine + holo-[ACP]. It functions in the pathway glycolipid biosynthesis; lipid IV(A) biosynthesis; lipid IV(A) from (3R)-3-hydroxytetradecanoyl-[acyl-carrier-protein] and UDP-N-acetyl-alpha-D-glucosamine: step 1/6. Involved in the biosynthesis of lipid A, a phosphorylated glycolipid that anchors the lipopolysaccharide to the outer membrane of the cell. In Rickettsia rickettsii, this protein is Acyl-[acyl-carrier-protein]--UDP-N-acetylglucosamine O-acyltransferase.